The sequence spans 215 residues: Urease accessory protein UreG (215 aa).

24-31 (GPVGSGKT) serves as a coordination point for GTP.

This sequence belongs to the SIMIBI class G3E GTPase family. UreG subfamily. Homodimer. UreD, UreF and UreG form a complex that acts as a GTP-hydrolysis-dependent molecular chaperone, activating the urease apoprotein by helping to assemble the nickel containing metallocenter of UreC. The UreE protein probably delivers the nickel.

The protein localises to the cytoplasm. In terms of biological role, facilitates the functional incorporation of the urease nickel metallocenter. This process requires GTP hydrolysis, probably effectuated by UreG. In Burkholderia orbicola (strain MC0-3), this protein is Urease accessory protein UreG.